The primary structure comprises 1755 residues: MESQQLSNYPQISHGSACASVTSKEVHTNQDPLDVSASKTEECEKASTKANSQQTTTPASSAVPENPHHASPQPASVPPPQNGPYPQQCMMTQNQANPSGWSFYGHPSMIPYTPYQMSPMYFPPGPQSQFPQYPSSVGTPLSTPSPESGNTFTDSSSADSDMTSTKKYVRPPPMLTSPNDFPNWVKTYIKFLQNSNLGGIIPTVNGKPVRQITDDELTFLYNTFQIFAPSQFLPTWVKDILSVDYTDIMKILSKSIEKMQSDTQEANDIVTLANLQYNGSTPADAFETKVTNIINRLNNNGIHINNKVACQLIMRGLSGEYKFLRYTRHRHLNMTVAELFLDIHAIYEEQQGSRNSKPNYRRNLSDEKNDSRSYTNTTKPKVIARNPQKTNNSKSKTARAHNVSTSNNSPSTDNDSISKSTTEPIQLNNKHDLHLGQELTESTVNHTNHSDDELPGHLLLDSGASRTLIRSAHHIHSASSNPDINVVDAQKRNIPINAIGDLQFHFQDNTKTSIKVLHTPNIAYDLLSLNELAAVDITACFTKNVLERSDGTVLAPIVKYGDFYWVSKKYLLPSNISVPTINNVHTSESTRKYPYPFIHRMLAHANAQTIRYSLKNNTITYFNESDVDWSSAIDYQCPDCLIGKSTKHRHIKGSRLKYQNSYEPFQYLHTDIFGPVHNLPKSAPSYFISFTDETTKFRWVYPLHDRREDSILDVFTTILAFIKNQFQASVLVIQMDRGSEYTNRTLHKFLEKNGITPCYTTTADSRAHGVAERLNRTLLDDCRTQLQCSGLPNHLWFSAIEFSTIVRNSLASPKSKKSARQHAGLAGLDISTLLPFGQPVIVNDHNPNSKIHPRGIPGYALHPSRNSYGYIIYLPSLKKTVDTTNYVILQGKESRLDQFNYDALTFDEDLNRLTASYQSFIASNEIQQSDDLNIESDHDFQSDIELHPEQPRNVLSKAVSPTDSTPPSTHTEDSKRVSKTNIRAPREVDPNISESNILPSKKRSSTPQISNIESTGSGGMHKLNVPLLAPMSQSNTHESSHASKSKDFRHSDSYSENETNHTNVPISSTGGTNNKTVPQISDQETEKRIIHRSPSIDASPPENNSSHNIVPIKTPTTVSEQNTEESIIADLPLPDLPPESPTEFPDPFKELPPINSHQTNSSLGGIGDSNAYTTINSKKRSLEDNETEIKVSRDTWNTKNMRSLEPPRSKKRIHLIAAVKAVKSIKPIRTTLRYDEAITYNKDIKEKEKYIEAYHKEVNQLLKMKTWDTDEYYDRKEIDPKRVINSMFIFNKKRDGTHKARFVARGDIQHPDTYDSGMQSNTVHHYALMTSLSLALDNNYYITQLDISSAYLYADIKEELYIRPPPHLGMNDKLIRLKKSLYGLKQSGANWYETIKSYLIKQCGMEEVRGWSCVFKNSQVTICLFVDDMILFSKDLNANKKIITTLKKQYDTKIINLGESDNEIQYDILGLEIKYQRGKYMKLGMENSLTEKIPKLNVPLNPKGRKLSAPGQPGLYIDQDELEIDEDEYKEKVHEMQKLIGLASYVGYKFRFDLLYYINTLAQHILFPSRQVLDMTYELIQFMWDTRDKQLIWHKNKPTEPDNKLVAISDASYGNQPYYKSQIGNIYLLNGKVIGGKSTKASLTCTSTTEAEIHAISESVPLLNNLSYLIQELNKKPIIKGLLTDSRSTISIIKSTNEEKFRNRFFGTKAMRLRDEVSGNNLYVYYIETKKNIADVMTKPLPIKTFKLLTNKWIH.

Polar residues-rich tracts occupy residues 1 to 23 (MESQ…SVTS), 48 to 60 (TKAN…TPAS), and 127 to 152 (QSQF…GNTF). 3 disordered regions span residues 1-93 (MESQ…MMTQ), 126-173 (PQSQ…RPPP), and 352-421 (GSRN…SKST). Residues 153–165 (TDSSSADSDMTST) show a composition bias toward low complexity. Positions 299–401 (NNGIHINNKV…NSKSKTARAH (103 aa)) are RNA-binding. A compositionally biased stretch (low complexity) spans 402-418 (NVSTSNNSPSTDNDSIS). The residue at position 416 (Ser-416) is a Phosphoserine. Asp-461 serves as the catalytic For protease activity; shared with dimeric partner. The tract at residues 583-640 (NVHTSESTRKYPYPFIHRMLAHANAQTIRYSLKNNTITYFNESDVDWSSAIDYQCPDC) is integrase-type zinc finger-like. An Integrase catalytic domain is found at 660–835 (NSYEPFQYLH…AGLDISTLLP (176 aa)). 2 residues coordinate Mg(2+): Asp-671 and Asp-736. Disordered stretches follow at residues 956 to 1087 (SKAV…ETEK), 1092 to 1111 (RSPS…NIVP), and 1130 to 1171 (DLPL…DSNA). Positions 960 to 969 (SPTDSTPPST) are enriched in low complexity. Over residues 1005 to 1015 (STPQISNIEST) the composition is skewed to polar residues. Residues 1038–1053 (ESSHASKSKDFRHSDS) are compositionally biased toward basic and acidic residues. Composition is skewed to polar residues over residues 1054–1082 (YSEN…QISD) and 1101–1111 (PENNSSHNIVP). Positions 1178-1212 (KKRSLEDNETEIKVSRDTWNTKNMRSLEPPRSKKR) match the Bipartite nuclear localization signal motif. Residues 1338–1476 (NNYYITQLDI…DILGLEIKYQ (139 aa)) form the Reverse transcriptase Ty1/copia-type domain. 6 residues coordinate Mg(2+): Asp-1346, Asp-1427, Asp-1428, Asp-1610, Glu-1652, and Asp-1685. Positions 1610-1752 (DASYGNQPYY…IKTFKLLTNK (143 aa)) constitute an RNase H Ty1/copia-type domain.

As to quaternary structure, the capsid protein forms a homotrimer, from which the VLPs are assembled. The protease is a homodimer, whose active site consists of two apposed aspartic acid residues. In terms of processing, initially, virus-like particles (VLPs) are composed of the structural unprocessed proteins Gag and Gag-Pol, and also contain the host initiator methionine tRNA (tRNA(i)-Met) which serves as a primer for minus-strand DNA synthesis, and a dimer of genomic Ty RNA. Processing of the polyproteins occurs within the particle and proceeds by an ordered pathway, called maturation. First, the protease (PR) is released by autocatalytic cleavage of the Gag-Pol polyprotein yielding capsid protein p45 and a Pol-p154 precursor protein. This cleavage is a prerequisite for subsequent processing of Pol-p154 at the remaining sites to release the mature structural and catalytic proteins. Maturation takes place prior to the RT reaction and is required to produce transposition-competent VLPs.

It localises to the cytoplasm. It is found in the nucleus. It carries out the reaction DNA(n) + a 2'-deoxyribonucleoside 5'-triphosphate = DNA(n+1) + diphosphate. The enzyme catalyses Endonucleolytic cleavage to 5'-phosphomonoester.. Its function is as follows. Capsid protein (CA) is the structural component of the virus-like particle (VLP), forming the shell that encapsulates the retrotransposons dimeric RNA genome. The particles are assembled from trimer-clustered units and there are holes in the capsid shells that allow for the diffusion of macromolecules. CA also has nucleocapsid-like chaperone activity, promoting primer tRNA(i)-Met annealing to the multipartite primer-binding site (PBS), dimerization of Ty1 RNA and initiation of reverse transcription. The aspartyl protease (PR) mediates the proteolytic cleavages of the Gag and Gag-Pol polyproteins after assembly of the VLP. Functionally, reverse transcriptase/ribonuclease H (RT) is a multifunctional enzyme that catalyzes the conversion of the retro-elements RNA genome into dsDNA within the VLP. The enzyme displays a DNA polymerase activity that can copy either DNA or RNA templates, and a ribonuclease H (RNase H) activity that cleaves the RNA strand of RNA-DNA heteroduplexes during plus-strand synthesis and hydrolyzes RNA primers. The conversion leads to a linear dsDNA copy of the retrotransposon that includes long terminal repeats (LTRs) at both ends. In terms of biological role, integrase (IN) targets the VLP to the nucleus, where a subparticle preintegration complex (PIC) containing at least integrase and the newly synthesized dsDNA copy of the retrotransposon must transit the nuclear membrane. Once in the nucleus, integrase performs the integration of the dsDNA into the host genome. This chain is Transposon Ty1-OL Gag-Pol polyprotein (TY1B-OL), found in Saccharomyces cerevisiae (strain ATCC 204508 / S288c) (Baker's yeast).